A 292-amino-acid chain; its full sequence is MSLFDWFADRRKEQSVVKVAQEPEEGDGLWSKCPECGQVVYRKDLLANASVCSNCGHHHRINSAERIALIADEGSFEAMDEALAPTDPLGFKDRRAYADRLRETQSGTGLRDGVITGMCRVDGIPMALAVMDFRFMGGSMGSVVGEKLTRLVEQATAKRLPLLIVCASGGARMQEGMLSLMQMAKISGALERHRQAGVLYMPLLTHPTTGGVTASFAMLGDLILAEPKALIGFAGRRVIEQTLREKLPDNFQTAEYLQDHGFVDTIVPRTQLKSTLANLMKLHGCLQGSAAV.

Residues 29–292 (LWSKCPECGQ…HGCLQGSAAV (264 aa)) form the CoA carboxyltransferase N-terminal domain. Residues cysteine 33, cysteine 36, cysteine 52, and cysteine 55 each contribute to the Zn(2+) site. The C4-type zinc finger occupies 33 to 55 (CPECGQVVYRKDLLANASVCSNC).

This sequence belongs to the AccD/PCCB family. In terms of assembly, acetyl-CoA carboxylase is a heterohexamer composed of biotin carboxyl carrier protein (AccB), biotin carboxylase (AccC) and two subunits each of ACCase subunit alpha (AccA) and ACCase subunit beta (AccD). Requires Zn(2+) as cofactor.

Its subcellular location is the cytoplasm. It catalyses the reaction N(6)-carboxybiotinyl-L-lysyl-[protein] + acetyl-CoA = N(6)-biotinyl-L-lysyl-[protein] + malonyl-CoA. It functions in the pathway lipid metabolism; malonyl-CoA biosynthesis; malonyl-CoA from acetyl-CoA: step 1/1. Functionally, component of the acetyl coenzyme A carboxylase (ACC) complex. Biotin carboxylase (BC) catalyzes the carboxylation of biotin on its carrier protein (BCCP) and then the CO(2) group is transferred by the transcarboxylase to acetyl-CoA to form malonyl-CoA. The polypeptide is Acetyl-coenzyme A carboxylase carboxyl transferase subunit beta (Synechococcus sp. (strain WH7803)).